Here is a 493-residue protein sequence, read N- to C-terminus: uncharacterized protein (493 aa).

Position 8–37 (8–37) interacts with FAD; the sequence is DFLVVGGGTCGCVVAARLSEDPSATVMLLE. The Proton acceptor role is filled by H429.

It belongs to the GMC oxidoreductase family. It depends on FAD as a cofactor.

This is an uncharacterized protein from Rhodococcus erythropolis (Arthrobacter picolinophilus).